The chain runs to 246 residues: MVYSNTYMLLGLGVFVLLSSHVLAYNMRADPSIHDSTLDDQKSNDFVKTASIAECPPGPDTYLELSDSTLDDQKSMDYVKDASTVDHNCPPGPHTYLELSAWLQEEQNSIDKVKKVLRTDEAPDNQKGLEYKDARHNDGPIEISTRTEKDNFIPSDGPIEISTRTENENFIPSDEPIEISTGTEKENFISSDEPSEISSGAEKENFIPSVSQVDWRTFHAKYPWIKKDGPNTVTGSRKLLNDIAIK.

The N-terminal stretch at 1-24 is a signal peptide; that stretch reads MVYSNTYMLLGLGVFVLLSSHVLA.

The protein localises to the symbiosome. The protein resides in the peribacteroid space. In terms of biological role, involved in the development and function of nodules. It might participate in the biological process of symbiotic nitrogen fixation. The polypeptide is Nodulin-25 (NMS-25) (Medicago sativa (Alfalfa)).